The chain runs to 280 residues: Phosphatidylserine decarboxylase proenzyme (280 aa).

Residues aspartate 88, histidine 144, and serine 247 each act as charge relay system; for autoendoproteolytic cleavage activity in the active site. Catalysis depends on serine 247, which acts as the Schiff-base intermediate with substrate; via pyruvic acid; for decarboxylase activity. Serine 247 is modified (pyruvic acid (Ser); by autocatalysis).

The protein belongs to the phosphatidylserine decarboxylase family. PSD-B subfamily. Prokaryotic type I sub-subfamily. Heterodimer of a large membrane-associated beta subunit and a small pyruvoyl-containing alpha subunit. Pyruvate serves as cofactor. Post-translationally, is synthesized initially as an inactive proenzyme. Formation of the active enzyme involves a self-maturation process in which the active site pyruvoyl group is generated from an internal serine residue via an autocatalytic post-translational modification. Two non-identical subunits are generated from the proenzyme in this reaction, and the pyruvate is formed at the N-terminus of the alpha chain, which is derived from the carboxyl end of the proenzyme. The autoendoproteolytic cleavage occurs by a canonical serine protease mechanism, in which the side chain hydroxyl group of the serine supplies its oxygen atom to form the C-terminus of the beta chain, while the remainder of the serine residue undergoes an oxidative deamination to produce ammonia and the pyruvoyl prosthetic group on the alpha chain. During this reaction, the Ser that is part of the protease active site of the proenzyme becomes the pyruvoyl prosthetic group, which constitutes an essential element of the active site of the mature decarboxylase.

The protein localises to the cell membrane. It catalyses the reaction a 1,2-diacyl-sn-glycero-3-phospho-L-serine + H(+) = a 1,2-diacyl-sn-glycero-3-phosphoethanolamine + CO2. Its pathway is phospholipid metabolism; phosphatidylethanolamine biosynthesis; phosphatidylethanolamine from CDP-diacylglycerol: step 2/2. Functionally, catalyzes the formation of phosphatidylethanolamine (PtdEtn) from phosphatidylserine (PtdSer). The protein is Phosphatidylserine decarboxylase proenzyme of Xanthomonas euvesicatoria pv. vesicatoria (strain 85-10) (Xanthomonas campestris pv. vesicatoria).